Consider the following 224-residue polypeptide: ATP synthase subunit a (224 aa).

Helical transmembrane passes span 17-37 (FSLN…IYWL), 72-92 (IFIS…FPYI), 99-119 (LTLT…YGWI), 125-145 (MFAH…MVCI), 166-186 (IAGH…SYIL), and 187-207 (VTFL…VAMI).

It belongs to the ATPase A chain family. In terms of assembly, F-type ATPases have 2 components, CF(1) - the catalytic core - and CF(0) - the membrane proton channel. CF(1) has five subunits: alpha(3), beta(3), gamma(1), delta(1), epsilon(1). CF(0) has three main subunits: a, b and c.

Its subcellular location is the mitochondrion inner membrane. Mitochondrial membrane ATP synthase (F(1)F(0) ATP synthase or Complex V) produces ATP from ADP in the presence of a proton gradient across the membrane which is generated by electron transport complexes of the respiratory chain. F-type ATPases consist of two structural domains, F(1) - containing the extramembraneous catalytic core and F(0) - containing the membrane proton channel, linked together by a central stalk and a peripheral stalk. During catalysis, ATP synthesis in the catalytic domain of F(1) is coupled via a rotary mechanism of the central stalk subunits to proton translocation. Key component of the proton channel; it may play a direct role in the translocation of protons across the membrane. This Drosophila melanogaster (Fruit fly) protein is ATP synthase subunit a (mt:ATPase6).